Reading from the N-terminus, the 413-residue chain is Peptidase T (413 aa).

His81 is a binding site for Zn(2+). Asp83 is an active-site residue. Asp143 lines the Zn(2+) pocket. Glu178 acts as the Proton acceptor in catalysis. Zn(2+) contacts are provided by Glu179, Asp201, and His383.

It belongs to the peptidase M20B family. Zn(2+) is required as a cofactor.

It localises to the cytoplasm. The catalysed reaction is Release of the N-terminal residue from a tripeptide.. Its function is as follows. Cleaves the N-terminal amino acid of tripeptides. This is Peptidase T from Lactococcus lactis subsp. cremoris (Streptococcus cremoris).